Consider the following 288-residue polypeptide: GCN5-related N-acetyltransferase 6, chloroplastic (288 aa).

The transit peptide at 1–111 (MSTISIHRTE…YWTAAWLRAE (111 aa)) directs the protein to the chloroplast. The region spanning 151–288 (SCIVAVKKEE…DDTYLLQYTS (138 aa)) is the N-acetyltransferase domain. Residues 215–217 (LCV), 223–228 (RQGIAC), 254–256 (NSV), and Tyr-261 each bind acetyl-CoA. The active-site Proton donor is Tyr-261.

This sequence belongs to the acetyltransferase family. GNAT subfamily. As to quaternary structure, oligomer. Post-translationally, autoacetylated. Expressed in green tissues and in roots.

The protein localises to the plastid. Its subcellular location is the chloroplast. It is found in the cytoplasm. The protein resides in the perinuclear region. The catalysed reaction is an N-terminal L-alpha-aminoacyl-[protein] + acetyl-CoA = N-terminal N(alpha)-acetyl-L-alpha-aminoacyl-[protein] + CoA + H(+). The enzyme catalyses L-lysyl-[protein] + acetyl-CoA = N(6)-acetyl-L-lysyl-[protein] + CoA + H(+). It carries out the reaction N-terminal L-alanyl-[protein] + acetyl-CoA = N-terminal N(alpha)-acetyl-L-alanyl-[protein] + CoA + H(+). It catalyses the reaction N-terminal L-seryl-[protein] + acetyl-CoA = N-terminal N(alpha)-acetyl-L-seryl-[protein] + CoA + H(+). The catalysed reaction is N-terminal L-threonyl-[protein] + acetyl-CoA = N-terminal N(alpha)-acetyl-L-threonyl-[protein] + CoA + H(+). The enzyme catalyses N-terminal L-methionyl-[protein] + acetyl-CoA = N-terminal N(alpha)-acetyl-L-methionyl-[protein] + CoA + H(+). It carries out the reaction N-terminal L-valyl-[protein] + acetyl-CoA = N-terminal N(alpha)-acetyl-L-valyl-[protein] + CoA + H(+). Its function is as follows. Protein acetyltransferase with dual specificity triggering both N-alpha-acetylation (NTA), with a large spectrum of modified N-termini, including methionine, alanine, serine, threonine and to a lower extent valine as substrates, and epsilon-lysine acetylation (KA). In Arabidopsis thaliana (Mouse-ear cress), this protein is GCN5-related N-acetyltransferase 6, chloroplastic.